We begin with the raw amino-acid sequence, 329 residues long: DNA repair protein RAD51 homolog 4 (329 aa).

The tract at residues 1-83 (MGMLRAGLCP…ELKTSTAILS (83 aa)) is preferentially binds ssDNA. The segment at 4–77 (LRAGLCPGLT…GADLYEELKT (74 aa)) is interaction with XRCC2. Residues 77-328 (TSTAILSTGI…EQSPELPGKQ (252 aa)) are interaction with RAD51C. 107–114 (GGPGSGKT) is an ATP binding site.

It belongs to the RecA family. RAD51 subfamily. As to quaternary structure, part of the BCDX2 complex consisting of RAD51B, RAD51C, RAD51D and XRCC2; the complex has a ring-like structure arranged into a flat disc around a central channel. In the absence of DNA, the BCDX2 subcomplex XRCC2:RAD51D formed a multimeric ring structure; in the presence of single-stranded DNA it formed a filamentous structure with the ssDNA. Interacts with SWSAP1 and ZSWIM7; involved in homologous recombination repair. Interacts with BLM; required for stimulation of BLM activity by the BCDX2 subcomplex XRCC2:RAD51D. Highly expressed in brain followed by testis. Also expressed in heart, liver, kidney, spleen, lung and skeletal muscle.

It localises to the nucleus. It is found in the chromosome. The protein resides in the telomere. Functionally, involved in the homologous recombination repair (HRR) pathway of double-stranded DNA breaks arising during DNA replication or induced by DNA-damaging agents. Bind to single-stranded DNA (ssDNA) and has DNA-dependent ATPase activity. Part of the RAD51 paralog protein complex BCDX2 which acts in the BRCA1-BRCA2-dependent HR pathway. Upon DNA damage, BCDX2 acts downstream of BRCA2 recruitment and upstream of RAD51 recruitment. BCDX2 binds predominantly to the intersection of the four duplex arms of the Holliday junction and to junction of replication forks. The BCDX2 complex was originally reported to bind single-stranded DNA, single-stranded gaps in duplex DNA and specifically to nicks in duplex DNA. Involved in telomere maintenance. The BCDX2 subcomplex XRCC2:RAD51D can stimulate Holliday junction resolution by BLM. This Mus musculus (Mouse) protein is DNA repair protein RAD51 homolog 4 (Rad51d).